The chain runs to 173 residues: Co-chaperone protein HscB homolog (173 aa).

The J domain maps to 3 to 75; that stretch reads NPFALFDLPI…ILRADCIIAL (73 aa).

This sequence belongs to the HscB family. Interacts with HscA and stimulates its ATPase activity.

Co-chaperone involved in the maturation of iron-sulfur cluster-containing proteins. Seems to help targeting proteins to be folded toward HscA. The polypeptide is Co-chaperone protein HscB homolog (Mannheimia succiniciproducens (strain KCTC 0769BP / MBEL55E)).